Consider the following 187-residue polypeptide: Flavin prenyltransferase UbiX (187 aa).

FMN is bound by residues 9 to 11 (GAS), Ser34, and Arg123. Dimethylallyl phosphate contacts are provided by Tyr153 and Lys169.

Belongs to the UbiX/PAD1 family.

It carries out the reaction dimethylallyl phosphate + FMNH2 = prenylated FMNH2 + phosphate. Functionally, flavin prenyltransferase that catalyzes the synthesis of the prenylated FMN cofactor (prenyl-FMN) for 4-hydroxy-3-polyprenylbenzoic acid decarboxylase UbiD. The prenyltransferase is metal-independent and links a dimethylallyl moiety from dimethylallyl monophosphate (DMAP) to the flavin N5 and C6 atoms of FMN. In Helicobacter pylori (strain ATCC 700392 / 26695) (Campylobacter pylori), this protein is Flavin prenyltransferase UbiX.